The primary structure comprises 347 residues: Palmitoyltransferase ZDHHC19 (347 aa).

The next 2 helical transmembrane spans lie at 29 to 49 (VFAAFNVTLLLFLSGLFFGFP) and 59 to 79 (WAFPAITGPLFILTFFSLVSL). The DHHC domain occupies 112-162 (EWCPKCLFHRPPRTYHCPWCNICVEDFDHHCKWVNNCIGHRNFRLFMLLVL). The active-site S-palmitoyl cysteine intermediate is the C142. 2 helical membrane passes run 156-176 (LFMLLVLSLCLYSGALLVTCL) and 194-214 (AILVAVPAAGFLIPLFLLLLI). The segment at 275 to 347 (IQEKTKPSPP…PTAEPAAGDP (73 aa)) is disordered.

The protein belongs to the DHHC palmitoyltransferase family.

The protein resides in the golgi apparatus membrane. It localises to the cytoplasm. The protein localises to the perinuclear region. The enzyme catalyses L-cysteinyl-[protein] + hexadecanoyl-CoA = S-hexadecanoyl-L-cysteinyl-[protein] + CoA. In terms of biological role, palmitoyltransferase that mediates palmitoylation oproteins, such as RRAS and SQSTM1. Catalyzes palmitoylation of RRAS, leading to increased cell viability. Acts as a positive regulator of autophagy by mediating palmitoylation of SQSTM1, promoting affinity between SQSTM1 and ATG8 proteins and recruitment of ubiquitinated cargo proteins to autophagosomes. In Mus musculus (Mouse), this protein is Palmitoyltransferase ZDHHC19 (Zdhhc19).